Consider the following 517-residue polypeptide: Benzoate 4-monooxygenase bphA (517 aa).

The chain crosses the membrane as a helical span at residues 4–24 (LLLSPYGAYLGLALLVLYYLL). Residues Asn282 and Asn325 are each glycosylated (N-linked (GlcNAc...) asparagine). Cys461 contributes to the heme binding site.

It belongs to the cytochrome P450 family. It depends on heme as a cofactor.

It localises to the membrane. It carries out the reaction benzoate + reduced [NADPH--hemoprotein reductase] + O2 = 4-hydroxybenzoate + oxidized [NADPH--hemoprotein reductase] + H2O + H(+). In terms of biological role, cytochrome P450 monooxygenase; part of the benzoic acid degradation pathway also known as the protocatechuic acid pathway. Benzoic acid debradation begins with the conversion of benzoic acid into 4-hydroxybenzoic acid through hydroxylation by the benzoate-4-monooxygenase bphA, and its partner NADPH-cytochrome P450 reductase cprA which act as a mediator in electron donation from NADPH. 4-Hydroxybenzoic acid is then converted into 3,4-dihydroxybenzoic acid (also called protocatechuic acid) by the p-hydroxybenzoate-m-hydroxylase phhA. Protocatechuic acid is converted into 3-carboxy-cis,cis-muconic acid by the intradiol ring-cleavage dioxygenase prcA, which is further metabolized through the 3-oxoadipate pathway to finally enter the tricarboxylic acid cycle (TCA). Responsible for cytochrome P450 dependent benzoate hydroxylation in microsomes; requires cprA as the mediator in electron donation from NADPH. In Aspergillus niger, this protein is Benzoate 4-monooxygenase bphA.